The primary structure comprises 94 residues: Non-specific lipid-transfer protein C4 (94 aa).

A signal peptide spans 1–26; it reads MAASKGNAAAAACALVLVLLAVGAEA. 4 disulfide bridges follow: Cys-34–Cys-72, Cys-44–Cys-59, Cys-60–Cys-85, and Cys-70–Cys-92. Residue Asn-91 is glycosylated (N-linked (GlcNAc...) asparagine).

Belongs to the plant LTP family.

In terms of biological role, lipid-transfer protein that may be regulated by the transcription factor UDT1 in developing anthers and play a role in tapetum development. The protein is Non-specific lipid-transfer protein C4 of Oryza sativa subsp. japonica (Rice).